We begin with the raw amino-acid sequence, 435 residues long: Enolase (435 aa).

Glutamine 167 lines the (2R)-2-phosphoglycerate pocket. Glutamate 209 functions as the Proton donor in the catalytic mechanism. The Mg(2+) site is built by aspartate 246, glutamate 292, and aspartate 319. The (2R)-2-phosphoglycerate site is built by lysine 344, arginine 373, serine 374, and lysine 395. Catalysis depends on lysine 344, which acts as the Proton acceptor.

The protein belongs to the enolase family. It depends on Mg(2+) as a cofactor.

It localises to the cytoplasm. Its subcellular location is the secreted. It is found in the cell surface. The enzyme catalyses (2R)-2-phosphoglycerate = phosphoenolpyruvate + H2O. The protein operates within carbohydrate degradation; glycolysis; pyruvate from D-glyceraldehyde 3-phosphate: step 4/5. Functionally, catalyzes the reversible conversion of 2-phosphoglycerate (2-PG) into phosphoenolpyruvate (PEP). It is essential for the degradation of carbohydrates via glycolysis. The chain is Enolase from Lachnospira eligens (strain ATCC 27750 / DSM 3376 / VPI C15-48 / C15-B4) (Eubacterium eligens).